A 216-amino-acid polypeptide reads, in one-letter code: Thiamine-phosphate synthase (216 aa).

4-amino-2-methyl-5-(diphosphooxymethyl)pyrimidine contacts are provided by residues 40 to 44 (QLRIK) and Asn72. Positions 73 and 92 each coordinate Mg(2+). Ser111 lines the 4-amino-2-methyl-5-(diphosphooxymethyl)pyrimidine pocket. 137-139 (TTT) serves as a coordination point for 2-[(2R,5Z)-2-carboxy-4-methylthiazol-5(2H)-ylidene]ethyl phosphate. Lys140 contacts 4-amino-2-methyl-5-(diphosphooxymethyl)pyrimidine. 2-[(2R,5Z)-2-carboxy-4-methylthiazol-5(2H)-ylidene]ethyl phosphate is bound by residues Gly169 and 189 to 190 (VS).

The protein belongs to the thiamine-phosphate synthase family. Mg(2+) serves as cofactor.

The enzyme catalyses 2-[(2R,5Z)-2-carboxy-4-methylthiazol-5(2H)-ylidene]ethyl phosphate + 4-amino-2-methyl-5-(diphosphooxymethyl)pyrimidine + 2 H(+) = thiamine phosphate + CO2 + diphosphate. It catalyses the reaction 2-(2-carboxy-4-methylthiazol-5-yl)ethyl phosphate + 4-amino-2-methyl-5-(diphosphooxymethyl)pyrimidine + 2 H(+) = thiamine phosphate + CO2 + diphosphate. It carries out the reaction 4-methyl-5-(2-phosphooxyethyl)-thiazole + 4-amino-2-methyl-5-(diphosphooxymethyl)pyrimidine + H(+) = thiamine phosphate + diphosphate. It functions in the pathway cofactor biosynthesis; thiamine diphosphate biosynthesis; thiamine phosphate from 4-amino-2-methyl-5-diphosphomethylpyrimidine and 4-methyl-5-(2-phosphoethyl)-thiazole: step 1/1. Condenses 4-methyl-5-(beta-hydroxyethyl)thiazole monophosphate (THZ-P) and 2-methyl-4-amino-5-hydroxymethyl pyrimidine pyrophosphate (HMP-PP) to form thiamine monophosphate (TMP). The protein is Thiamine-phosphate synthase of Photorhabdus laumondii subsp. laumondii (strain DSM 15139 / CIP 105565 / TT01) (Photorhabdus luminescens subsp. laumondii).